We begin with the raw amino-acid sequence, 725 residues long: MLTKSKQDPHLNHILNARHHDPFSYLGLHQDGTQYILRLFQPFAARAWLQTASGWVPLQRSHEAGLFEWKGNTPPPVPCRIRLEENGHSWETYDAYTFWTTLSPEELYLFGEGRLKQAYRTFGAHLCEQQGVAGVRFVVWAPNAERVSVIGNFNHWDGRMHQMRVHGSSGVWEIFIPGLTSSDLYKFEIRNRQTGQILVKTDPYGFSFEQRPGTAARVTAHGHYAWQDAEWLEDRARADWLHAPFNCYEVHLGSWRRDAHGEFLGYRELAHQLVPYMQEMGYTHIELLPVSEHPLNESWGYQTTGYFAPTNRFGSPDDLRYFVDQCHQAGIGVILDWVPGHFPKDDWALARFDGSALFEHEDPRLGEHQDWGTYIFNYGRNEVRNFLLASAHYWLEEFHMDGLRVDAVASMLYLDYSRKEGEWLPNRHGGRENLEAIDFLKQLNVMVHEDFPGALTIAEESTSWPMVSRPVYLGGLGFSMKWNMGWMNDTLSYMQHDPIHRRFHHDKLTFGQIYAYSENFVLPFSHDEVVHGKRSLLDKMPGDTWQKFANLRLLATYQMTASGKKLNFMGNELAQGREWNVNSSLDWHLLDLHWHQGIQRLHRDLSHLYRQVPALHELDFDAHGFEWIDCSDSDQSIINYLRRARDGSFVLVLLNFTPVLRSGYRVGTPLAGHYREIFNSDAGYYGGSNQGNGNGLQTEAYPWMGHSHSLVVTIPPLGGVIIQPG.

Asp406 acts as the Nucleophile in catalysis. The active-site Proton donor is the Glu459.

This sequence belongs to the glycosyl hydrolase 13 family. GlgB subfamily. As to quaternary structure, monomer.

It carries out the reaction Transfers a segment of a (1-&gt;4)-alpha-D-glucan chain to a primary hydroxy group in a similar glucan chain.. Its pathway is glycan biosynthesis; glycogen biosynthesis. Its function is as follows. Catalyzes the formation of the alpha-1,6-glucosidic linkages in glycogen by scission of a 1,4-alpha-linked oligosaccharide from growing alpha-1,4-glucan chains and the subsequent attachment of the oligosaccharide to the alpha-1,6 position. This chain is 1,4-alpha-glucan branching enzyme GlgB, found in Methylobacillus flagellatus (strain ATCC 51484 / DSM 6875 / VKM B-1610 / KT).